Reading from the N-terminus, the 861-residue chain is MEALGPGPPASLFQPPRRPGLGTVGKPIRLLANHFQVQIPKIDVYHYDVDIKPEKRPRRVNREVVDTMVRHFKMQIFGDRQPGYDGKRNMYTAHPLPIGRDRVDMEVTLPGEGKDQTFKVSVQWVSVVSLQLLLEALAGHLNEVPDDSVQALDVITRHLPSMRYTPVGRSFFSPPEGYYHPLGGGREVWFGFHQSVRPAMWNMMLNIDVSATAFYRAQPIIEFMCEVLDIQNINEQTKPLTDSQRVKFTKEIRGLKVEVTHCGQMKRKYRVCNVTRRPASHQTFPLQLENGQAMECTVAQYFKQKYSLQLKYPHLPCLQVGQEQKHTYLPLEVCNIVAGQRCIKKLTDNQTSTMIKATARSAPDRQEEISRLVKSNSMVGGPDPYLKEFGIVVHNEMTELTGRVLPAPMLQYGGRNKTVATPNQGVWDMRGKQFYAGIEIKVWAVACFAPQKQCREDLLKSFTDQLRKISKDAGMPIQGQPCFCKYAQGADSVEPMFKHLKMTYVGLQLIVVILPGKTPVYAEVKRVGDTLLGMATQCVQVKNVVKTSPQTLSNLCLKINAKLGGINNVLVPHQRPSVFQQPVIFLGADVTHPPAGDGKKPSIAAVVGSMDGHPSRYCATVRVQTSRQEISQELLYSQEVIQDLTNMVRELLIQFYKSTRFKPTRIIYYRGGVSEGQMKQVAWPELIAIRKACISLEEDYRPGITYIVVQKRHHTRLFCADKTERVGKSGNVPAGTTVDSTITHPSEFDFYLCSHAGIQGTSRPSHYQVLWDDNCFTADELQLLTYQLCHTYVRCTRSVSIPAPAYYARLVAFRARYHLVDKDHDSAEGSHVSGQSNGRDPQALAKAVQIHHDTQHTMYFA.

The 120-residue stretch at 219 to 338 folds into the PAZ domain; it reads PIIEFMCEVL…LPLEVCNIVA (120 aa). Positions 509 to 820 constitute a Piwi domain; sequence LIVVILPGKT…VAFRARYHLV (312 aa). The disordered stretch occupies residues 825 to 846; the sequence is DSAEGSHVSGQSNGRDPQALAK.

The protein belongs to the argonaute family. Ago subfamily. As to quaternary structure, interacts with EIF4B, IMP8, PRMT5, TNRC6A and TNRC6B. Interacts with ZFP36. Ubiquitinated on surface-exposed lysines by a SCF-like E3 ubiquitin-protein ligase complex containing ZSWIM8 during target-directed microRNA degradation (TDMD), a process that mediates degradation of microRNAs (miRNAs). Ubiquitination by the SCF-like E3 ubiquitin-protein ligase complex containing ZSWIM8 leads to its subsequent degradation, thereby exposing miRNAs for degradation. ZSWIM8 recognizes and binds AGO4 when it is engaged with a TDMD target.

Its subcellular location is the cytoplasm. The protein resides in the P-body. In terms of biological role, required for RNA-mediated gene silencing (RNAi). Binds to short RNAs such as microRNAs (miRNAs) and represses the translation of mRNAs which are complementary to them. Lacks endonuclease activity and does not appear to cleave target mRNAs. Also required for RNA-directed transcription and replication of the human hapatitis delta virus (HDV). This is Protein argonaute-4 (AGO4) from Homo sapiens (Human).